The sequence spans 184 residues: Photosystem I assembly protein Ycf4 (184 aa).

A run of 2 helical transmembrane segments spans residues 22–42 and 57–77; these read FCWA…GTSS and IIFF…LFIS.

Belongs to the Ycf4 family.

It localises to the plastid. It is found in the chloroplast thylakoid membrane. Functionally, seems to be required for the assembly of the photosystem I complex. In Draba nemorosa (Woodland whitlowgrass), this protein is Photosystem I assembly protein Ycf4.